The sequence spans 169 residues: S-ribosylhomocysteine lyase (169 aa).

The Fe cation site is built by H54, H58, and C128.

It belongs to the LuxS family. In terms of assembly, homodimer. Fe cation serves as cofactor.

The enzyme catalyses S-(5-deoxy-D-ribos-5-yl)-L-homocysteine = (S)-4,5-dihydroxypentane-2,3-dione + L-homocysteine. Involved in the synthesis of autoinducer 2 (AI-2) which is secreted by bacteria and is used to communicate both the cell density and the metabolic potential of the environment. The regulation of gene expression in response to changes in cell density is called quorum sensing. Catalyzes the transformation of S-ribosylhomocysteine (RHC) to homocysteine (HC) and 4,5-dihydroxy-2,3-pentadione (DPD). The sequence is that of S-ribosylhomocysteine lyase from Shewanella sp. (strain MR-4).